A 356-amino-acid polypeptide reads, in one-letter code: Nucleotide-binding protein GDI1189/Gdia_1902 (356 aa).

20–27 contributes to the ATP binding site; sequence GLSGAGKS. 65–68 lines the GTP pocket; sequence DSRT. The interval 285–313 is disordered; sequence EPGGTCDSPGKPAHIEKGAAPTDVQSGGA.

This sequence belongs to the RapZ-like family.

Functionally, displays ATPase and GTPase activities. This is Nucleotide-binding protein GDI1189/Gdia_1902 from Gluconacetobacter diazotrophicus (strain ATCC 49037 / DSM 5601 / CCUG 37298 / CIP 103539 / LMG 7603 / PAl5).